The sequence spans 379 residues: Sulfate adenylyltransferase (379 aa).

Belongs to the sulfate adenylyltransferase family.

It catalyses the reaction sulfate + ATP + H(+) = adenosine 5'-phosphosulfate + diphosphate. The protein operates within sulfur metabolism; hydrogen sulfide biosynthesis; sulfite from sulfate: step 1/3. The polypeptide is Sulfate adenylyltransferase (Thermococcus onnurineus (strain NA1)).